We begin with the raw amino-acid sequence, 223 residues long: 7-cyano-7-deazaguanine synthase (223 aa).

11-21 (ISGGMDSALAA) is a binding site for ATP. Residues Cys-189, Cys-197, Cys-200, and Cys-203 each contribute to the Zn(2+) site.

It belongs to the QueC family. It depends on Zn(2+) as a cofactor.

The catalysed reaction is 7-carboxy-7-deazaguanine + NH4(+) + ATP = 7-cyano-7-deazaguanine + ADP + phosphate + H2O + H(+). It participates in purine metabolism; 7-cyano-7-deazaguanine biosynthesis. Its function is as follows. Catalyzes the ATP-dependent conversion of 7-carboxy-7-deazaguanine (CDG) to 7-cyano-7-deazaguanine (preQ(0)). The sequence is that of 7-cyano-7-deazaguanine synthase from Campylobacter fetus subsp. fetus (strain 82-40).